A 1495-amino-acid chain; its full sequence is Nuclear pore complex protein NUP160 (1495 aa).

In terms of assembly, part of the nuclear pore complex (NPC). The NPC has an eight-fold symmetrical structure comprising a central transport channel and two rings, the cytoplasmic and nuclear rings, to which eight filaments are attached. The cytoplasmic filaments have loose ends, while the nuclear filaments are joined in a distal ring, forming a nuclear basket. NPCs are highly dynamic in configuration and composition, and can be devided in 3 subcomplexes, the NUP62 subcomplex, the NUP107-160 subcomplex and the NUP93 subcomplex, containing approximately 30 different nucleoporin proteins. As to expression, expressed in roots, stems, anthers, siliques and vascular tissues of cotyledons, leaves and hypocotyls.

It is found in the nucleus membrane. The protein localises to the nucleus. It localises to the nuclear pore complex. In terms of biological role, contributes to the transfer of mature mRNA from the nucleus to the cytosol. Required for both R gene-mediated and basal disease resistance. RNA export seems to play a critical role in stress responses and regulation of plant growth and development. Required for proper expression of factors associated with auxin signaling. This Arabidopsis thaliana (Mouse-ear cress) protein is Nuclear pore complex protein NUP160.